We begin with the raw amino-acid sequence, 227 residues long: Cytidylate kinase (227 aa).

12–20 (GPSGAGKGT) provides a ligand contact to ATP.

The protein belongs to the cytidylate kinase family. Type 1 subfamily.

The protein resides in the cytoplasm. It catalyses the reaction CMP + ATP = CDP + ADP. It carries out the reaction dCMP + ATP = dCDP + ADP. The polypeptide is Cytidylate kinase (Shigella flexneri).